A 357-amino-acid polypeptide reads, in one-letter code: Prostaglandin D2 receptor (357 aa).

The Extracellular segment spans residues 1–20; it reads MNESYRCQTSTWVERGSSAT. N2 carries an N-linked (GlcNAc...) asparagine glycan. The chain crosses the membrane as a helical span at residues 21–41; it reads MGAVLFGAGLLGNLLALVLLA. The Cytoplasmic portion of the chain corresponds to 42 to 58; that stretch reads RSGLGSCRPGPLHPPPS. The chain crosses the membrane as a helical span at residues 59–79; sequence VFYVLVCGLTVTDLLGKCLIS. Residues 80–106 lie on the Extracellular side of the membrane; the sequence is PMVLAAYAQNQSLKELLPASGNQLCET. An N-linked (GlcNAc...) asparagine glycan is attached at N89. An intrachain disulfide couples C104 to C182. A helical membrane pass occupies residues 107-127; it reads FAFLMSFFGLASTLQLLAMAV. At 128-149 the chain is on the cytoplasmic side; sequence ECWLSLGHPFFYQRHVTLRRGV. The helical transmembrane segment at 150–170 threads the bilayer; that stretch reads LVAPVVAAFCLAFCALPFAGF. Residues 171-194 lie on the Extracellular side of the membrane; it reads GKFVQYCPGTWCFIQMIHKERSFS. Residues 195-215 traverse the membrane as a helical segment; it reads VIGFSVLYSSLMALLVLATVV. The Cytoplasmic portion of the chain corresponds to 216–261; that stretch reads CNLGAMYNLYDMHRRQRHYPHRCSRDRAQSGSDYRHGSLHPLEELD. A helical membrane pass occupies residues 262 to 282; the sequence is HFVLLALMTVLFTMCSLPLIY. Residues 283 to 306 are Extracellular-facing; that stretch reads RAYYGAFKLENKAEGDSEDLQALR. The helical transmembrane segment at 307-327 threads the bilayer; the sequence is FLSVISIVDPWIFIIFRTSVF. Residues 328-357 lie on the Cytoplasmic side of the membrane; the sequence is RMLFHKVFTRPLIYRNWSSHSQQSNVESTL.

This sequence belongs to the G-protein coupled receptor 1 family. As to expression, most abundantly expressed in the ileum, followed by lung, stomach and uterus.

The protein resides in the cell membrane. Receptor for prostaglandin D2 (PGD2). The activity of this receptor is mainly mediated by G(s) proteins that stimulate adenylate cyclase, resulting in an elevation of intracellular cAMP. A mobilization of calcium is also observed, but without formation of inositol 1,4,5-trisphosphate. Involved in PLA2G3-dependent maturation of mast cells. PLA2G3 is secreted by immature mast cells and acts on nearby fibroblasts upstream to PTDGS to synthesize PGD2, which in turn promotes mast cell maturation and degranulation via PTGDR. This is Prostaglandin D2 receptor (Ptgdr) from Mus musculus (Mouse).